A 284-amino-acid chain; its full sequence is Bifunctional protein FolD (284 aa).

Residues 164 to 166 (GRS) and S189 each bind NADP(+).

This sequence belongs to the tetrahydrofolate dehydrogenase/cyclohydrolase family. In terms of assembly, homodimer.

It catalyses the reaction (6R)-5,10-methylene-5,6,7,8-tetrahydrofolate + NADP(+) = (6R)-5,10-methenyltetrahydrofolate + NADPH. It carries out the reaction (6R)-5,10-methenyltetrahydrofolate + H2O = (6R)-10-formyltetrahydrofolate + H(+). The protein operates within one-carbon metabolism; tetrahydrofolate interconversion. In terms of biological role, catalyzes the oxidation of 5,10-methylenetetrahydrofolate to 5,10-methenyltetrahydrofolate and then the hydrolysis of 5,10-methenyltetrahydrofolate to 10-formyltetrahydrofolate. This chain is Bifunctional protein FolD, found in Listeria monocytogenes serotype 4b (strain F2365).